We begin with the raw amino-acid sequence, 24 residues long: Brevinin-1PTb (24 aa).

A disulfide bridge links Cys-18 with Cys-24.

As to expression, expressed by the skin glands.

It is found in the secreted. Functionally, has antibacterial activity against the Gram-positive bacterium S.aureus ATCC 25923 and the Gram-negative bacterium E.coli ATCC 25726. This Pulchrana picturata (Malaysian fire frog) protein is Brevinin-1PTb.